We begin with the raw amino-acid sequence, 556 residues long: 2-isopropylmalate synthase (556 aa).

Residues 33 to 307 (PIWLSTDLRD…DPQLDFSDID (275 aa)) enclose the Pyruvate carboxyltransferase domain. Residues Asp-42, His-246, His-248, and Asn-282 each contribute to the Mg(2+) site. The tract at residues 439 to 556 (ASAPYALKGH…ALSQAESRAA (118 aa)) is regulatory domain.

This sequence belongs to the alpha-IPM synthase/homocitrate synthase family. LeuA type 2 subfamily. As to quaternary structure, homodimer. Mg(2+) serves as cofactor.

It is found in the cytoplasm. The catalysed reaction is 3-methyl-2-oxobutanoate + acetyl-CoA + H2O = (2S)-2-isopropylmalate + CoA + H(+). It functions in the pathway amino-acid biosynthesis; L-leucine biosynthesis; L-leucine from 3-methyl-2-oxobutanoate: step 1/4. Its function is as follows. Catalyzes the condensation of the acetyl group of acetyl-CoA with 3-methyl-2-oxobutanoate (2-ketoisovalerate) to form 3-carboxy-3-hydroxy-4-methylpentanoate (2-isopropylmalate). The protein is 2-isopropylmalate synthase of Ectopseudomonas mendocina (strain ymp) (Pseudomonas mendocina).